Here is a 209-residue protein sequence, read N- to C-terminus: Guanylate kinase (209 aa).

One can recognise a Guanylate kinase-like domain in the interval 9–188 (GIMLVISSPS…SVYQIKCIFT (180 aa)). 16-23 (SPSGGGKT) serves as a coordination point for ATP.

It belongs to the guanylate kinase family.

The protein localises to the cytoplasm. It carries out the reaction GMP + ATP = GDP + ADP. Essential for recycling GMP and indirectly, cGMP. In Ehrlichia chaffeensis (strain ATCC CRL-10679 / Arkansas), this protein is Guanylate kinase.